A 478-amino-acid polypeptide reads, in one-letter code: UDP-N-acetylmuramate--L-alanine ligase (478 aa).

122–128 (GTHGKTT) lines the ATP pocket.

The protein belongs to the MurCDEF family.

It localises to the cytoplasm. It catalyses the reaction UDP-N-acetyl-alpha-D-muramate + L-alanine + ATP = UDP-N-acetyl-alpha-D-muramoyl-L-alanine + ADP + phosphate + H(+). It participates in cell wall biogenesis; peptidoglycan biosynthesis. In terms of biological role, cell wall formation. The sequence is that of UDP-N-acetylmuramate--L-alanine ligase from Stenotrophomonas maltophilia (strain K279a).